A 158-amino-acid polypeptide reads, in one-letter code: ATP synthase subunit delta, mitochondrial (158 aa).

Residues 1–22 (MFRLTSARALFRVANVAARRTY) constitute a mitochondrion transit peptide.

The protein belongs to the ATPase epsilon chain family. F-type ATPases have 2 components, CF(1) - the catalytic core - and CF(0) - the membrane proton channel. CF(1) has five subunits: alpha(3), beta(3), gamma(1), delta(1), epsilon(1). CF(0) has three main subunits: a, b and c.

It localises to the mitochondrion. Its subcellular location is the mitochondrion inner membrane. Its function is as follows. Mitochondrial membrane ATP synthase (F(1)F(0) ATP synthase or Complex V) produces ATP from ADP in the presence of a proton gradient across the membrane which is generated by electron transport complexes of the respiratory chain. F-type ATPases consist of two structural domains, F(1) - containing the extramembraneous catalytic core, and F(0) - containing the membrane proton channel, linked together by a central stalk and a peripheral stalk. During catalysis, ATP turnover in the catalytic domain of F(1) is coupled via a rotary mechanism of the central stalk subunits to proton translocation. Part of the complex F(1) domain and of the central stalk which is part of the complex rotary element. Rotation of the central stalk against the surrounding alpha(3)beta(3) subunits leads to hydrolysis of ATP in three separate catalytic sites on the beta subunits. In Eremothecium gossypii (strain ATCC 10895 / CBS 109.51 / FGSC 9923 / NRRL Y-1056) (Yeast), this protein is ATP synthase subunit delta, mitochondrial (ATP16).